Consider the following 898-residue polypeptide: Protein translocase subunit SecA (898 aa).

ATP is bound by residues glutamine 87, 105–109, and aspartate 512; that span reads GEGKT. Polar residues predominate over residues 855–865; it reads MQYQNNEGTSS. The tract at residues 855 to 898 is disordered; that stretch reads MQYQNNEGTSSLHEKSEHKIGRNESCPCGSGKKYKHCHGSKAKY. Basic and acidic residues predominate over residues 866 to 876; that stretch reads LHEKSEHKIGR. Cysteine 880, cysteine 882, cysteine 891, and histidine 892 together coordinate Zn(2+). Over residues 886-898 the composition is skewed to basic residues; sequence KKYKHCHGSKAKY.

Belongs to the SecA family. As to quaternary structure, monomer and homodimer. Part of the essential Sec protein translocation apparatus which comprises SecA, SecYEG and auxiliary proteins SecDF-YajC and YidC. The cofactor is Zn(2+).

The protein localises to the cell inner membrane. The protein resides in the cytoplasm. It catalyses the reaction ATP + H2O + cellular proteinSide 1 = ADP + phosphate + cellular proteinSide 2.. Functionally, part of the Sec protein translocase complex. Interacts with the SecYEG preprotein conducting channel. Has a central role in coupling the hydrolysis of ATP to the transfer of proteins into and across the cell membrane, serving both as a receptor for the preprotein-SecB complex and as an ATP-driven molecular motor driving the stepwise translocation of polypeptide chains across the membrane. This is Protein translocase subunit SecA from Histophilus somni (strain 129Pt) (Haemophilus somnus).